A 592-amino-acid polypeptide reads, in one-letter code: BTB/POZ domain-containing protein At5g03250 (592 aa).

A BTB domain is found at 28 to 98 (SDVTIEVGDM…CYGVKIELTA (71 aa)). An NPH3 domain is found at 217–502 (DWWFDDASFL…VQVLFFEQLR (286 aa)). At Tyr-443 the chain carries Phosphotyrosine.

It belongs to the NPH3 family.

The protein operates within protein modification; protein ubiquitination. Its function is as follows. May act as a substrate-specific adapter of an E3 ubiquitin-protein ligase complex (CUL3-RBX1-BTB) which mediates the ubiquitination and subsequent proteasomal degradation of target proteins. The chain is BTB/POZ domain-containing protein At5g03250 from Arabidopsis thaliana (Mouse-ear cress).